Reading from the N-terminus, the 374-residue chain is Queuine tRNA-ribosyltransferase (374 aa).

Residue Asp89 is the Proton acceptor of the active site. Residues 89 to 93 (DSGGF), Asp143, Gln185, and Gly212 contribute to the substrate site. The tract at residues 243–249 (GVGKPED) is RNA binding. The active-site Nucleophile is Asp262. The interval 267–271 (TRNAR) is RNA binding; important for wobble base 34 recognition. Residues Cys300, Cys302, Cys305, and His331 each coordinate Zn(2+).

It belongs to the queuine tRNA-ribosyltransferase family. Homodimer. Within each dimer, one monomer is responsible for RNA recognition and catalysis, while the other monomer binds to the replacement base PreQ1. The cofactor is Zn(2+).

The catalysed reaction is 7-aminomethyl-7-carbaguanine + guanosine(34) in tRNA = 7-aminomethyl-7-carbaguanosine(34) in tRNA + guanine. The protein operates within tRNA modification; tRNA-queuosine biosynthesis. In terms of biological role, catalyzes the base-exchange of a guanine (G) residue with the queuine precursor 7-aminomethyl-7-deazaguanine (PreQ1) at position 34 (anticodon wobble position) in tRNAs with GU(N) anticodons (tRNA-Asp, -Asn, -His and -Tyr). Catalysis occurs through a double-displacement mechanism. The nucleophile active site attacks the C1' of nucleotide 34 to detach the guanine base from the RNA, forming a covalent enzyme-RNA intermediate. The proton acceptor active site deprotonates the incoming PreQ1, allowing a nucleophilic attack on the C1' of the ribose to form the product. After dissociation, two additional enzymatic reactions on the tRNA convert PreQ1 to queuine (Q), resulting in the hypermodified nucleoside queuosine (7-(((4,5-cis-dihydroxy-2-cyclopenten-1-yl)amino)methyl)-7-deazaguanosine). The protein is Queuine tRNA-ribosyltransferase of Saccharophagus degradans (strain 2-40 / ATCC 43961 / DSM 17024).